The following is a 492-amino-acid chain: Probable cytochrome P450 310a1 (492 aa).

C428 serves as a coordination point for heme.

It belongs to the cytochrome P450 family. Requires heme as cofactor.

The protein localises to the endoplasmic reticulum membrane. It localises to the microsome membrane. Functionally, may be involved in the metabolism of insect hormones and in the breakdown of synthetic insecticides. The protein is Probable cytochrome P450 310a1 (Cyp310a1) of Drosophila melanogaster (Fruit fly).